A 1009-amino-acid polypeptide reads, in one-letter code: Dihydropyrimidine dehydrogenase [NADP(+)] (1009 aa).

The region spanning 69-99 is the 4Fe-4S ferredoxin-type 1 domain; it reads RGALFESARCLKCADAPCQKGCPTQLDIKSF. Cysteine 78, cysteine 81, cysteine 86, and cysteine 90 together coordinate [4Fe-4S] cluster. Valine 128 lines the FAD pocket. [4Fe-4S] cluster-binding residues include cysteine 129, cysteine 135, cysteine 139, and glutamine 155. Residues 193 to 197, 217 to 225, arginine 234, and leucine 260 contribute to the FAD site; these read GCGPT and EKEQYLGGL. Residues 339–342, 363–364, arginine 370, 436–438, and 479–484 each bind NADP(+); these read AGDT, RR, AFG, and DLVGNG. 478 to 486 provides a ligand contact to FAD; sequence GDLVGNGTT. FMN-binding positions include serine 548 and 572–573; that span reads KT. Substrate contacts are provided by residues asparagine 607 and 666–668; that span reads NLS. Cysteine 669 functions as the Proton acceptor in the catalytic mechanism. Residue lysine 707 participates in FMN binding. A substrate-binding site is contributed by 734-735; it reads NT. FMN-binding positions include glycine 765, 791–793, and 814–815; these read TGG and CS. 2 consecutive 4Fe-4S ferredoxin-type domains span residues 932–964 and 965–995; these read VVAL…FDGK and THIP…MVPR. [4Fe-4S] cluster-binding residues include cysteine 941, cysteine 944, cysteine 947, cysteine 951, cysteine 974, cysteine 977, cysteine 980, and cysteine 984.

Belongs to the dihydropyrimidine dehydrogenase family. Homodimer. The cofactor is [4Fe-4S] cluster. FAD is required as a cofactor. FMN serves as cofactor.

Its subcellular location is the cytoplasm. The catalysed reaction is 5,6-dihydrouracil + NADP(+) = uracil + NADPH + H(+). Its pathway is amino-acid biosynthesis; beta-alanine biosynthesis. Involved in pyrimidine base degradation. Catalyzes the reduction of uracil and thymine. The polypeptide is Dihydropyrimidine dehydrogenase [NADP(+)] (pyd1) (Dictyostelium discoideum (Social amoeba)).